The primary structure comprises 468 residues: Putative ankyrin repeat protein R873 (468 aa).

ANK repeat units lie at residues 38 to 68, 78 to 107, 109 to 137, 138 to 167, 169 to 197, 198 to 227, 229 to 257, 258 to 287, 289 to 316, 317 to 346, 348 to 376, 378 to 406, 407 to 436, and 438 to 466; these read IKTDIIEYIVDNNLLDVLKYFVVLKNLKHNL, SLNENLVKNCEKGNIEIIKYLLDIGADIEG, DNCAVLTASHHGHIEVVKYLVCKGANFRA, NNDKAVRWASDKGHLDVVKYLVSQGSDIRS, NDCSICWASGNGHLEMVKYLVSQGVNIRT, NDDWAIRLASENGHLEVVKYLVSQGADIRS, DDHAIKWASGNGHLEMVKYLVSQSSNIIA, EDNYAVRWASENGHLEVIKYLVSQGSNITS, YYTIIAASKNGHIDIVKYLVSQGVNIRD, CDSSAVQIASENGHLEVVKYLVSQGIDFRE, DDLTFDMALRKGHVEIVKYLVGQGVDFRV, DDYPVRMASHCGRLGVVKYFVSQGADVRA, EDDYAVRMSAEKGHIEVVKFLVDNGANIRA, and NDYAVRLASENGHIKIVEYLVSMGAVLNK.

The polypeptide is Putative ankyrin repeat protein R873 (Acanthamoeba polyphaga mimivirus (APMV)).